The following is a 390-amino-acid chain: UPF0229 protein Cbei_0567 (390 aa).

Residues 77–108 (SGVGNEKRGEKLGNGNKKLAKGNQGAGNEEGD) are disordered. The segment covering 89 to 103 (GNGNKKLAKGNQGAG) has biased composition (low complexity).

It belongs to the UPF0229 family.

In Clostridium beijerinckii (strain ATCC 51743 / NCIMB 8052) (Clostridium acetobutylicum), this protein is UPF0229 protein Cbei_0567.